The primary structure comprises 440 residues: 23S rRNA (uracil(1939)-C(5))-methyltransferase RlmD (440 aa).

The TRAM domain occupies 10 to 68 (KSTQPQRIEFTVDSLDHHCVGIGRHQGKAIFIEGALPGELVKARILEDKKQYAHAALQQ). Residues Cys81, Cys87, Cys90, and Cys169 each coordinate [4Fe-4S] cluster. Positions 273, 302, 307, 323, 350, and 371 each coordinate S-adenosyl-L-methionine. The active-site Nucleophile is the Cys397.

Belongs to the class I-like SAM-binding methyltransferase superfamily. RNA M5U methyltransferase family. RlmD subfamily.

It carries out the reaction uridine(1939) in 23S rRNA + S-adenosyl-L-methionine = 5-methyluridine(1939) in 23S rRNA + S-adenosyl-L-homocysteine + H(+). Its function is as follows. Catalyzes the formation of 5-methyl-uridine at position 1939 (m5U1939) in 23S rRNA. The chain is 23S rRNA (uracil(1939)-C(5))-methyltransferase RlmD from Aeromonas hydrophila subsp. hydrophila (strain ATCC 7966 / DSM 30187 / BCRC 13018 / CCUG 14551 / JCM 1027 / KCTC 2358 / NCIMB 9240 / NCTC 8049).